A 585-amino-acid chain; its full sequence is A-type ATP synthase subunit A (585 aa).

231 to 238 contributes to the ATP binding site; sequence GPFGSGKT.

The protein belongs to the ATPase alpha/beta chains family. As to quaternary structure, has multiple subunits with at least A(3), B(3), C, D, E, F, H, I and proteolipid K(x).

The protein resides in the cell membrane. It carries out the reaction ATP + H2O + 4 H(+)(in) = ADP + phosphate + 5 H(+)(out). In terms of biological role, produces ATP from ADP in the presence of a proton gradient across the membrane. The archaeal alpha chain is a catalytic subunit. Its function is as follows. Component of the A-type ATP synthase that produces ATP from ADP in the presence of a proton gradient across the membrane. The A chain is the catalytic subunit. The protein is A-type ATP synthase subunit A of Thermococcus kodakarensis (strain ATCC BAA-918 / JCM 12380 / KOD1) (Pyrococcus kodakaraensis (strain KOD1)).